The chain runs to 462 residues: UDP-N-acetylmuramoylalanine--D-glutamate ligase (462 aa).

117–123 (GTNGKTT) lines the ATP pocket.

It belongs to the MurCDEF family.

It is found in the cytoplasm. The catalysed reaction is UDP-N-acetyl-alpha-D-muramoyl-L-alanine + D-glutamate + ATP = UDP-N-acetyl-alpha-D-muramoyl-L-alanyl-D-glutamate + ADP + phosphate + H(+). Its pathway is cell wall biogenesis; peptidoglycan biosynthesis. In terms of biological role, cell wall formation. Catalyzes the addition of glutamate to the nucleotide precursor UDP-N-acetylmuramoyl-L-alanine (UMA). The protein is UDP-N-acetylmuramoylalanine--D-glutamate ligase of Synechococcus sp. (strain CC9902).